Consider the following 378-residue polypeptide: Quinolinate synthase (378 aa).

Residues H59 and S80 each coordinate iminosuccinate. C125 contributes to the [4Fe-4S] cluster binding site. Iminosuccinate-binding positions include 151–153 (YAN) and S168. C212 is a [4Fe-4S] cluster binding site. Iminosuccinate-binding positions include 238 to 240 (HPE) and T255. C309 lines the [4Fe-4S] cluster pocket.

Belongs to the quinolinate synthase family. Type 1 subfamily. The cofactor is [4Fe-4S] cluster.

Its subcellular location is the cytoplasm. The catalysed reaction is iminosuccinate + dihydroxyacetone phosphate = quinolinate + phosphate + 2 H2O + H(+). Its pathway is cofactor biosynthesis; NAD(+) biosynthesis; quinolinate from iminoaspartate: step 1/1. Catalyzes the condensation of iminoaspartate with dihydroxyacetone phosphate to form quinolinate. The sequence is that of Quinolinate synthase from Burkholderia cenocepacia (strain HI2424).